The chain runs to 524 residues: Serine/threonine-protein phosphatase 2A 56 kDa regulatory subunit gamma isoform (524 aa).

Met1 carries the post-translational modification N-acetylmethionine. The tract at residues 476–508 is disordered; the sequence is SDEARQAQKELKKDRPLVRRKSELPQDPHTEKA.

This sequence belongs to the phosphatase 2A regulatory subunit B56 family. In terms of assembly, PP2A consists of a common heterodimeric core enzyme, composed of PPP2CA a 36 kDa catalytic subunit (subunit C) and PPP2R1A a 65 kDa constant regulatory subunit (PR65 or subunit A), that associates with a variety of regulatory subunits. Proteins that associate with the core dimer include three families of regulatory subunits B (the R2/B/PR55/B55, R3/B''/PR72/PR130/PR59 and R5/B'/B56 families), the 48 kDa variable regulatory subunit, viral proteins, and cell signaling molecules. Interacts with SGO1. Interacts with SGO1; the interaction is direct. May interact with TP53. Interacts with IER3 and/or ERK kinases; regulates ERK dephosphorylation. Interacts with CIP2A; this interaction stabilizes CIP2A. As to expression, highest levels in heart, liver and brain. Lower levels in skeletal muscle, spleen, kidney and lung. Isoform 4 is testis-specific.

Its subcellular location is the nucleus. It is found in the chromosome. The protein resides in the centromere. Functionally, the B regulatory subunit might modulate substrate selectivity and catalytic activity, and might also direct the localization of the catalytic enzyme to a particular subcellular compartment. The PP2A-PPP2R5C holoenzyme may activate TP53 and play a role in DNA damage-induced inhibition of cell proliferation. PP2A-PPP2R5C may also regulate the ERK signaling pathway through ERK dephosphorylation. This is Serine/threonine-protein phosphatase 2A 56 kDa regulatory subunit gamma isoform (Ppp2r5c) from Mus musculus (Mouse).